The chain runs to 427 residues: Trigger factor (427 aa).

The PPIase FKBP-type domain occupies 163–248 (GDTVVIDFVG…VHEVKSKEVP (86 aa)).

The protein belongs to the FKBP-type PPIase family. Tig subfamily.

It localises to the cytoplasm. It catalyses the reaction [protein]-peptidylproline (omega=180) = [protein]-peptidylproline (omega=0). In terms of biological role, involved in protein export. Acts as a chaperone by maintaining the newly synthesized protein in an open conformation. Functions as a peptidyl-prolyl cis-trans isomerase. This chain is Trigger factor, found in Streptococcus uberis (strain ATCC BAA-854 / 0140J).